A 124-amino-acid chain; its full sequence is Late histone H2B.2.1 (124 aa).

The disordered stretch occupies residues 1 to 32 (MPAKQTSGKGAKKAGKAKGRPAGASKTRRRKR). Positions 10 to 19 (GAKKAGKAKG) are enriched in basic residues. Ser111 carries O-linked (GlcNAc) serine glycosylation. Lys119 is covalently cross-linked (Glycyl lysine isopeptide (Lys-Gly) (interchain with G-Cter in ubiquitin)).

It belongs to the histone H2B family. As to quaternary structure, the nucleosome is a histone octamer containing two molecules each of H2A, H2B, H3 and H4 assembled in one H3-H4 heterotetramer and two H2A-H2B heterodimers. The octamer wraps approximately 147 bp of DNA. Monoubiquitination of Lys-119 gives a specific tag for epigenetic transcriptional activation and is also prerequisite for histone H3 'Lys-4' and 'Lys-79' methylation. In terms of processing, glcNAcylation at Ser-111 promotes monoubiquitination of Lys-119. It fluctuates in response to extracellular glucose, and associates with transcribed genes.

The protein localises to the nucleus. The protein resides in the chromosome. In terms of biological role, core component of nucleosome. Nucleosomes wrap and compact DNA into chromatin, limiting DNA accessibility to the cellular machineries which require DNA as a template. Histones thereby play a central role in transcription regulation, DNA repair, DNA replication and chromosomal stability. DNA accessibility is regulated via a complex set of post-translational modifications of histones, also called histone code, and nucleosome remodeling. In Psammechinus miliaris (Green sea urchin), this protein is Late histone H2B.2.1.